A 356-amino-acid chain; its full sequence is Galectin-9C (356 aa).

Residues 17–148 (FSGTIQGGLQ…SVQLSYISFQ (132 aa)) form the Galectin 1 domain. Residue 82–88 (WGPEERK) coordinates a beta-D-galactoside. The tract at residues 170–190 (FPPRPRGRRQKPPSVRPANPA) is disordered. The 129-residue stretch at 228–356 (FITTIPGGLY…GDIQLTHVQT (129 aa)) folds into the Galectin 2 domain. 288-294 (WGSEERS) contacts a beta-D-galactoside.

In terms of biological role, binds galactosides. The protein is Galectin-9C (LGALS9C) of Homo sapiens (Human).